Here is a 395-residue protein sequence, read N- to C-terminus: Elongation factor Tu (395 aa).

The 195-residue stretch at 10–204 folds into the tr-type G domain; the sequence is KPHVNIGTIG…EVDAYIPTPE (195 aa). Residues 19–26 are G1; that stretch reads GHVDHGKT. 19-26 provides a ligand contact to GTP; that stretch reads GHVDHGKT. Thr-26 is a Mg(2+) binding site. Residues 60-64 form a G2 region; the sequence is GITIS. The tract at residues 81-84 is G3; that stretch reads DCPG. Residues 81–85 and 136–139 contribute to the GTP site; these read DCPGH and NKCD. A G4 region spans residues 136–139; it reads NKCD. Positions 174-176 are G5; it reads SAL.

It belongs to the TRAFAC class translation factor GTPase superfamily. Classic translation factor GTPase family. EF-Tu/EF-1A subfamily. As to quaternary structure, monomer.

Its subcellular location is the cytoplasm. It carries out the reaction GTP + H2O = GDP + phosphate + H(+). GTP hydrolase that promotes the GTP-dependent binding of aminoacyl-tRNA to the A-site of ribosomes during protein biosynthesis. This Bacillus cereus (strain G9842) protein is Elongation factor Tu.